Here is a 243-residue protein sequence, read N- to C-terminus: Probable glycerol uptake facilitator protein (243 aa).

2 helical membrane-spanning segments follow: residues 7 to 27 and 44 to 64; these read ILLG…GVCA and LLIA…SIQV. Positions 72-74 match the NPA 1 motif; that stretch reads NPA. Transmembrane regions (helical) follow at residues 88–108, 143–163, and 166–186; these read IGLL…AQII, ISYE…GDYH, and TGVF…GCAI. Positions 187 to 189 match the NPA 2 motif; sequence NPA. A helical transmembrane segment spans residues 221–241; the sequence is LVPLLAPIAAGLIMGGFSLLI.

It belongs to the MIP/aquaporin (TC 1.A.8) family.

It localises to the cell membrane. It carries out the reaction glycerol(in) = glycerol(out). Its function is as follows. Mediates glycerol diffusion across the cytoplasmic membrane via a pore-type mechanism. In Mycoplasmoides gallisepticum (strain R(low / passage 15 / clone 2)) (Mycoplasma gallisepticum), this protein is Probable glycerol uptake facilitator protein (glpF).